Consider the following 344-residue polypeptide: Phosphate acyltransferase (344 aa).

The protein belongs to the PlsX family. In terms of assembly, homodimer. Probably interacts with PlsY.

It localises to the cytoplasm. The catalysed reaction is a fatty acyl-[ACP] + phosphate = an acyl phosphate + holo-[ACP]. Its pathway is lipid metabolism; phospholipid metabolism. Its function is as follows. Catalyzes the reversible formation of acyl-phosphate (acyl-PO(4)) from acyl-[acyl-carrier-protein] (acyl-ACP). This enzyme utilizes acyl-ACP as fatty acyl donor, but not acyl-CoA. The chain is Phosphate acyltransferase from Acaryochloris marina (strain MBIC 11017).